The following is a 417-amino-acid chain: mRNA export factor ICP27 homolog (417 aa).

Acidic residues predominate over residues 1-28 (MEDIIEGGISSDDDFDSSDSSSDEEESD). The tract at residues 1–143 (MEDIIEGGIS…NGPLRNGPPR (143 aa)) is disordered. An interaction with RNA region spans residues 64–120 (RQRSPITWEHQSPLSRVYRSPSPMRFGKRPRISSNSTSRSCKTSWADRVREAAAQRR). Residues 88–94 (RFGKRPR) carry the Nuclear localization signal motif. A compositionally biased stretch (low complexity) spans 96-107 (SSNSTSRSCKTS). An interaction with host ALYREF or mouse ALYREF2 region spans residues 106–120 (TSWADRVREAAAQRR). Basic and acidic residues predominate over residues 108–117 (WADRVREAAA). The Nuclear localization signal signature appears at 118–127 (QRRPSRPFRK). Over residues 120–130 (RPSRPFRKPYS) the composition is skewed to basic residues. Residues 132–141 (PRNGPLRNGP) show a composition bias toward low complexity. Residues cysteine 295, histidine 385, cysteine 389, and cysteine 394 each contribute to the Zn(2+) site. A CHC2-type zinc finger spans residues 295–394 (CLMQTTPQDH…HLNKCPSSTC (100 aa)).

This sequence belongs to the HHV-1 ICP27 protein family. Homodimer. Homodimerization is required for transactivation. Interacts with host ALYREF and with mouse ALYREF2. Associates in a complex with RNA, and host export factors NXF1/TAP and ALYREF or ALYREF2; these interactions allow nuclear export of viral transcripts.

The protein resides in the host cytoplasm. The protein localises to the host nucleus. Functionally, probably acts as a viral splicing factor that regulates viral RNA splicing. Functions as a multifunctional regulator of the expression of viral lytic genes. Early protein that promotes the accumulation and nuclear export of viral intronless RNA transcripts by interacting with mRNAs and cellular export proteins. The chain is mRNA export factor ICP27 homolog (EJRF1) from Saimiriine herpesvirus 2 (strain 11) (SaHV-2).